We begin with the raw amino-acid sequence, 293 residues long: Zinc finger protein 80 (293 aa).

C2H2-type zinc fingers lie at residues 69–91 and 97–119; these read YKCK…HQIH and YECQ…MRIH. The segment at 125–147 adopts a C2H2-type 3; atypical zinc-finger fold; the sequence is CKCVECGKVFNRRSHLLCYHQIH. 4 C2H2-type zinc fingers span residues 153-175, 181-203, 209-231, and 237-259; these read YECS…RMTH, FGCK…MKIH, YKCG…SMTH, and YECK…TRSH.

Belongs to the krueppel C2H2-type zinc-finger protein family.

The protein localises to the nucleus. In terms of biological role, may be involved in transcriptional regulation. This Macaca mulatta (Rhesus macaque) protein is Zinc finger protein 80 (ZNF80).